Reading from the N-terminus, the 819-residue chain is Leucine--tRNA ligase (819 aa).

The 'HIGH' region motif lies at 40–51 (PYPSGAGLHVGH). A 'KMSKS' region motif is present at residues 600 to 604 (KMSKS). K603 serves as a coordination point for ATP.

The protein belongs to the class-I aminoacyl-tRNA synthetase family.

The protein localises to the cytoplasm. The catalysed reaction is tRNA(Leu) + L-leucine + ATP = L-leucyl-tRNA(Leu) + AMP + diphosphate. The chain is Leucine--tRNA ligase from Chlamydia muridarum (strain MoPn / Nigg).